We begin with the raw amino-acid sequence, 914 residues long: Isoleucine--tRNA ligase (914 aa).

Positions 64 to 74 (PYANGNFHLGH) match the 'HIGH' region motif. Position 557 (E557) interacts with L-isoleucyl-5'-AMP. The 'KMSKS' region motif lies at 598 to 602 (AMSKS). Residue K601 coordinates ATP. The Zn(2+) site is built by C889, C892, C906, and C909.

It belongs to the class-I aminoacyl-tRNA synthetase family. IleS type 1 subfamily. Monomer. Requires Zn(2+) as cofactor.

It is found in the cytoplasm. The catalysed reaction is tRNA(Ile) + L-isoleucine + ATP = L-isoleucyl-tRNA(Ile) + AMP + diphosphate. Its function is as follows. Catalyzes the attachment of isoleucine to tRNA(Ile). As IleRS can inadvertently accommodate and process structurally similar amino acids such as valine, to avoid such errors it has two additional distinct tRNA(Ile)-dependent editing activities. One activity is designated as 'pretransfer' editing and involves the hydrolysis of activated Val-AMP. The other activity is designated 'posttransfer' editing and involves deacylation of mischarged Val-tRNA(Ile). This chain is Isoleucine--tRNA ligase, found in Leptospira borgpetersenii serovar Hardjo-bovis (strain JB197).